Reading from the N-terminus, the 127-residue chain is Large ribosomal subunit protein bL17 (127 aa).

This sequence belongs to the bacterial ribosomal protein bL17 family. Part of the 50S ribosomal subunit. Contacts protein L32.

The chain is Large ribosomal subunit protein bL17 from Lactobacillus helveticus (strain DPC 4571).